A 256-amino-acid polypeptide reads, in one-letter code: Glycerol-3-phosphate acyltransferase (256 aa).

Helical transmembrane passes span 2 to 22, 58 to 78, 90 to 110, 123 to 143, 153 to 173, and 211 to 231; these read FPYL…SVLW, LAVA…AIGL, SYFI…WFKF, LIVV…IFAF, IIGT…GVMG, and FADG…ILVV.

The protein belongs to the PlsY family. In terms of assembly, probably interacts with PlsX.

It is found in the cell membrane. The enzyme catalyses an acyl phosphate + sn-glycerol 3-phosphate = a 1-acyl-sn-glycero-3-phosphate + phosphate. The protein operates within lipid metabolism; phospholipid metabolism. In terms of biological role, catalyzes the transfer of an acyl group from acyl-phosphate (acyl-PO(4)) to glycerol-3-phosphate (G3P) to form lysophosphatidic acid (LPA). This enzyme utilizes acyl-phosphate as fatty acyl donor, but not acyl-CoA or acyl-ACP. The chain is Glycerol-3-phosphate acyltransferase from Mesoplasma florum (strain ATCC 33453 / NBRC 100688 / NCTC 11704 / L1) (Acholeplasma florum).